The chain runs to 105 residues: ATP synthase subunit c (105 aa).

The next 3 membrane-spanning stretches (helical) occupy residues 3-23, 32-52, and 78-98; these read FLAL…GGMG, SILG…IGMG, and VAMA…IIAI.

It belongs to the ATPase C chain family. In terms of assembly, F-type ATPases have 2 components, F(1) - the catalytic core - and F(0) - the membrane proton channel. F(1) has five subunits: alpha(3), beta(3), gamma(1), delta(1), epsilon(1). F(0) has three main subunits: a(1), b(2) and c(10-14). The alpha and beta chains form an alternating ring which encloses part of the gamma chain. F(1) is attached to F(0) by a central stalk formed by the gamma and epsilon chains, while a peripheral stalk is formed by the delta and b chains.

The protein localises to the cell inner membrane. F(1)F(0) ATP synthase produces ATP from ADP in the presence of a proton or sodium gradient. F-type ATPases consist of two structural domains, F(1) containing the extramembraneous catalytic core and F(0) containing the membrane proton channel, linked together by a central stalk and a peripheral stalk. During catalysis, ATP synthesis in the catalytic domain of F(1) is coupled via a rotary mechanism of the central stalk subunits to proton translocation. Functionally, key component of the F(0) channel; it plays a direct role in translocation across the membrane. A homomeric c-ring of between 10-14 subunits forms the central stalk rotor element with the F(1) delta and epsilon subunits. This is ATP synthase subunit c from Helicobacter pylori (strain P12).